The chain runs to 600 residues: L-galactono-1,4-lactone dehydrogenase, mitochondrial (600 aa).

The N-terminal 25 residues, 1-25 (MLRSLLLRRSNARSLRPPFPPLRTL), are a transit peptide targeting the mitochondrion. The segment at 16 to 51 (RPPFPPLRTLCTSGQTLTPAPPPPPPPPPPISSSAS) is disordered. Positions 26–91 (CTSGQTLTPA…AKHKKAQIFR (66 aa)) are cleaved as a propeptide — removed in mature form. The span at 34–46 (PAPPPPPPPPPPI) shows a compositional bias: pro residues. The chain crosses the membrane as a helical span at residues 58 to 74 (YAGYAALALFSGAATYF). The region spanning 108–279 (THEVQTRNFN…AEVTLQCVER (172 aa)) is the FAD-binding PCMH-type domain.

It depends on FAD as a cofactor.

Its subcellular location is the mitochondrion membrane. It catalyses the reaction L-galactono-1,4-lactone + 4 Fe(III)-[cytochrome c] = L-dehydroascorbate + 4 Fe(II)-[cytochrome c] + 5 H(+). Its pathway is cofactor biosynthesis; L-ascorbate biosynthesis. With respect to regulation, inhibited by sulfhydryl-modifying agents such as N-ethylmaleimide, monoiodoacetic acid and p-hydroxymercuribenzoic acid. No inhibition by riboflavin and lycorine. Functionally, involved in the biosynthesis of ascorbic acid. Uses L-galactono-1,4-lactone as substrate, but not L-gulono-1,4-lactone, D-galactono-1,4-lactone, D-gulono-1,4-lactone, D-erythronic-1,4-lactone, D-xylonic-1,4-lactone, L-mannono-1,4-lactone, D-galactonic acid, D-glucuronic acid or D-gluconic acid. FAD, NAD, NADP and O(2) cannot act as electron acceptor. This Brassica oleracea (Wild cabbage) protein is L-galactono-1,4-lactone dehydrogenase, mitochondrial.